The sequence spans 165 residues: Growth arrest and DNA damage-inducible protein GADD45 alpha (165 aa).

At threonine 2 the chain carries Phosphothreonine.

Belongs to the GADD45 family. In terms of assembly, interacts with AURKA, PCNA, GADD45GIP1 and MAPK14.

It localises to the nucleus. In terms of biological role, might affect PCNA interaction with some CDK (cell division protein kinase) complexes; stimulates DNA excision repair in vitro and inhibits entry of cells into S phase. In T-cells, functions as a regulator of p38 MAPKs by inhibiting p88 phosphorylation and activity. In Cricetulus griseus (Chinese hamster), this protein is Growth arrest and DNA damage-inducible protein GADD45 alpha (GADD45A).